Here is a 155-residue protein sequence, read N- to C-terminus: Small ribosomal subunit protein uS7cz/uS7cy (155 aa).

Belongs to the universal ribosomal protein uS7 family. In terms of assembly, part of the 30S ribosomal subunit.

It localises to the plastid. Its subcellular location is the chloroplast. Its function is as follows. One of the primary rRNA binding proteins, it binds directly to 16S rRNA where it nucleates assembly of the head domain of the 30S subunit. The chain is Small ribosomal subunit protein uS7cz/uS7cy (rps7-A) from Crucihimalaya wallichii (Rock-cress).